The chain runs to 585 residues: Zinc finger protein 496 (585 aa).

The segment at 1 to 41 is disordered; it reads MPTALCPRVLAPKESEEPRKMRSPPGENPSPQGEPPSPESS. Residues 11–20 show a composition bias toward basic and acidic residues; it reads APKESEEPRK. A Glycyl lysine isopeptide (Lys-Gly) (interchain with G-Cter in SUMO2) cross-link involves residue Lys13. Residues 26–38 are compositionally biased toward pro residues; the sequence is GENPSPQGEPPSP. An SCAN box domain is found at 42 to 124; it reads RRLFRRFRYQ…AAVEALEREP (83 aa). Residues 141 to 167 form a disordered region; sequence DDGDGPAAPQDLEQERMSAESQSYPDA. Phosphoserine is present on Ser182. One can recognise a KRAB domain in the interval 220–294; sequence SPFKDMILCF…DLQDKEIPQA (75 aa). Residues 358–397 are disordered; sequence SSSGDEDSQHSPYCTEELRSPPEDLHSVPAHQSNASAEGE. Basic and acidic residues predominate over residues 373-383; the sequence is EELRSPPEDLH. The segment covering 387–397 has biased composition (polar residues); that stretch reads AHQSNASAEGE. Residues 405-427 form a C2H2-type 1; degenerate zinc finger; sequence YVCPNCGKIFRWRVNFIRHLRSR. 2 consecutive C2H2-type zinc fingers follow at residues 433–455 and 461–483; these read HKCS…LETH and YRCT…RRIH. A disordered region spans residues 483–506; the sequence is HLQPASQQPMKKSEEEALETEGTG. Lys494 participates in a covalent cross-link: Glycyl lysine isopeptide (Lys-Gly) (interchain with G-Cter in SUMO2). C2H2-type zinc fingers lie at residues 520–543 and 551–573; these read FQCG…RHCH and FQCR…ERLH. The short motif at 575-579 is the Nuclear localization signal element; the sequence is KRRSK.

This sequence belongs to the krueppel C2H2-type zinc-finger protein family. As to quaternary structure, interacts (via zinc-fingers) with JARID2. Interacts with NSD1.

It localises to the nucleus. Functionally, DNA-binding transcription factor that can both act as an activator and a repressor. This is Zinc finger protein 496 (Znf496) from Mus musculus (Mouse).